Reading from the N-terminus, the 524-residue chain is Serine/threonine-protein phosphatase 2A 56 kDa regulatory subunit gamma isoform (524 aa).

Methionine 1 is modified (N-acetylmethionine). The segment at 476–508 (SDEARQAQKELKKDRPLVRRKSELPQDPHTEKA) is disordered.

The protein belongs to the phosphatase 2A regulatory subunit B56 family. PP2A consists of a common heterodimeric core enzyme, composed of PPP2CA a 36 kDa catalytic subunit (subunit C) and PPP2R1A a 65 kDa constant regulatory subunit (PR65 or subunit A), that associates with a variety of regulatory subunits. Proteins that associate with the core dimer include three families of regulatory subunits B (the R2/B/PR55/B55, R3/B''/PR72/PR130/PR59 and R5/B'/B56 families), the 48 kDa variable regulatory subunit, viral proteins, and cell signaling molecules. Interacts with SGO1. Interacts with SGO1; the interaction is direct. May interact with TP53. Interacts with IER3 and/or ERK kinases; regulates ERK dephosphorylation. Interacts with CIP2A; this interaction stabilizes CIP2A. In terms of tissue distribution, highest levels in heart, liver and brain. Lower levels in skeletal muscle, spleen, kidney and lung. Isoform 4 is testis-specific.

The protein localises to the nucleus. It localises to the chromosome. The protein resides in the centromere. Its function is as follows. The B regulatory subunit might modulate substrate selectivity and catalytic activity, and might also direct the localization of the catalytic enzyme to a particular subcellular compartment. The PP2A-PPP2R5C holoenzyme may activate TP53 and play a role in DNA damage-induced inhibition of cell proliferation. PP2A-PPP2R5C may also regulate the ERK signaling pathway through ERK dephosphorylation. In Mus musculus (Mouse), this protein is Serine/threonine-protein phosphatase 2A 56 kDa regulatory subunit gamma isoform (Ppp2r5c).